We begin with the raw amino-acid sequence, 140 residues long: ATP synthase epsilon chain (140 aa).

It belongs to the ATPase epsilon chain family. As to quaternary structure, F-type ATPases have 2 components, CF(1) - the catalytic core - and CF(0) - the membrane proton channel. CF(1) has five subunits: alpha(3), beta(3), gamma(1), delta(1), epsilon(1). CF(0) has three main subunits: a, b and c.

It localises to the cell inner membrane. Produces ATP from ADP in the presence of a proton gradient across the membrane. The polypeptide is ATP synthase epsilon chain (Neisseria meningitidis serogroup C (strain 053442)).